We begin with the raw amino-acid sequence, 303 residues long: Sulfate adenylyltransferase subunit 2 (303 aa).

The protein belongs to the PAPS reductase family. CysD subfamily. In terms of assembly, heterodimer composed of CysD, the smaller subunit, and CysN.

It carries out the reaction sulfate + ATP + H(+) = adenosine 5'-phosphosulfate + diphosphate. Its pathway is sulfur metabolism; hydrogen sulfide biosynthesis; sulfite from sulfate: step 1/3. Functionally, with CysN forms the ATP sulfurylase (ATPS) that catalyzes the adenylation of sulfate producing adenosine 5'-phosphosulfate (APS) and diphosphate, the first enzymatic step in sulfur assimilation pathway. APS synthesis involves the formation of a high-energy phosphoric-sulfuric acid anhydride bond driven by GTP hydrolysis by CysN coupled to ATP hydrolysis by CysD. In Phocaeicola vulgatus (strain ATCC 8482 / DSM 1447 / JCM 5826 / CCUG 4940 / NBRC 14291 / NCTC 11154) (Bacteroides vulgatus), this protein is Sulfate adenylyltransferase subunit 2.